The chain runs to 257 residues: Thiazole synthase (257 aa).

The active-site Schiff-base intermediate with DXP is K98. Residues G159, 185–186, and 207–208 contribute to the 1-deoxy-D-xylulose 5-phosphate site; these read AG and NT.

The protein belongs to the ThiG family. Homotetramer. Forms heterodimers with either ThiH or ThiS.

Its subcellular location is the cytoplasm. It carries out the reaction [ThiS sulfur-carrier protein]-C-terminal-Gly-aminoethanethioate + 2-iminoacetate + 1-deoxy-D-xylulose 5-phosphate = [ThiS sulfur-carrier protein]-C-terminal Gly-Gly + 2-[(2R,5Z)-2-carboxy-4-methylthiazol-5(2H)-ylidene]ethyl phosphate + 2 H2O + H(+). Its pathway is cofactor biosynthesis; thiamine diphosphate biosynthesis. Functionally, catalyzes the rearrangement of 1-deoxy-D-xylulose 5-phosphate (DXP) to produce the thiazole phosphate moiety of thiamine. Sulfur is provided by the thiocarboxylate moiety of the carrier protein ThiS. In vitro, sulfur can be provided by H(2)S. This Anaeromyxobacter dehalogenans (strain 2CP-1 / ATCC BAA-258) protein is Thiazole synthase.